The following is a 224-amino-acid chain: Uracil phosphoribosyltransferase (224 aa).

Arg-92 contacts 5-phospho-alpha-D-ribose 1-diphosphate. Position 109 (Lys-109) interacts with GTP. 5-phospho-alpha-D-ribose 1-diphosphate-binding positions include Arg-117 and 145–153 (DPMLATGGT). Uracil is bound by residues Ile-210 and 215–217 (GDA). Asp-216 contacts 5-phospho-alpha-D-ribose 1-diphosphate.

Belongs to the UPRTase family. Mg(2+) is required as a cofactor.

The enzyme catalyses UMP + diphosphate = 5-phospho-alpha-D-ribose 1-diphosphate + uracil. Its pathway is pyrimidine metabolism; UMP biosynthesis via salvage pathway; UMP from uracil: step 1/1. Its activity is regulated as follows. Allosterically activated by GTP. Catalyzes the conversion of uracil and 5-phospho-alpha-D-ribose 1-diphosphate (PRPP) to UMP and diphosphate. The chain is Uracil phosphoribosyltransferase (UPP) from Nicotiana tabacum (Common tobacco).